Consider the following 584-residue polypeptide: Endogenous retrovirus group FC1 Env polyprotein (584 aa).

The N-terminal stretch at 1–22 (MARPSPLCLLLLLTLLPPIVPS) is a signal peptide. The Extracellular portion of the chain corresponds to 23–514 (NSLLTEPPFR…NYGGGWWQSP (492 aa)). 2 N-linked (GlcNAc...) asparagine glycosylation sites follow: Asn69 and Asn247. Residues 251 to 254 (CFLC) carry the CXXC motif. Asn272, Asn276, Asn308, Asn313, Asn322, Asn334, Asn342, and Asn346 each carry an N-linked (GlcNAc...) asparagine glycan. The fusion peptide stretch occupies residues 388 to 413 (PLVIGVSLTSSLVASGLGTGAIVHFI). The short motif at 449 to 465 (MQNRRALDLLTADKGGT) is the CKS-17 element. A disulfide bridge connects residues Cys466 and Cys473. The short motif at 466 to 474 (CMFLGEECC) is the CX6CC element. Asn478 carries an N-linked (GlcNAc...) asparagine glycan. A helical transmembrane segment spans residues 515 to 540 (LTTWIIPFISPILIICLLLLIAPCVL). The Cytoplasmic portion of the chain corresponds to 541-584 (KFIKNRISEVSRVTVNQMLLHPYSRLPTSEDHYDVALTQQEAAR).

The protein belongs to the gamma type-C retroviral envelope protein family. HERV class-I F(c)1 env subfamily. In terms of assembly, the surface (SU) and transmembrane (TM) proteins form a heterodimer. SU and TM are attached by noncovalent interactions or by a labile interchain disulfide bond. Post-translationally, specific enzymatic cleavages in vivo yield the mature SU and TM proteins. In terms of processing, the CXXC motif is highly conserved across a broad range of retroviral envelope proteins. It is thought to participate in the formation of a labile disulfide bond possibly with the CX6CC motif present in the transmembrane protein.

Its subcellular location is the virion. The protein localises to the cell membrane. Retroviral envelope proteins mediate receptor recognition and membrane fusion during early infection. Endogenous envelope proteins may have kept, lost or modified their original function during evolution. This endogenous envelope protein has lost its original fusogenic properties. Its function is as follows. SU mediates receptor recognition. Functionally, TM anchors the envelope heterodimer to the viral membrane through one transmembrane domain. The other hydrophobic domain, called fusion peptide, mediates fusion of the viral membrane with the target cell membrane. The polypeptide is Endogenous retrovirus group FC1 Env polyprotein (ERVFC1) (Pan troglodytes (Chimpanzee)).